Consider the following 716-residue polypeptide: Photosystem I P700 chlorophyll a apoprotein A1 (716 aa).

8 consecutive transmembrane segments (helical) span residues 57–80 (VFSAHFGQLAIILIWLSGMYFHGA), 143–166 (LYCTAIGGLIFAGLMLFAGWFHYH), 182–206 (LNHHLAGLLGLGSLSWAGHQVHVSL), 278–296 (TVHHHLAIAILFLIAGHMY), 333–356 (WHAQLALNLAMLGSLTIVVAHHMY), 372–398 (LSLFTHHMWIGGFLIVGAAAHAAIFMV), 420–442 (AIISHLNWVCIFLGFHSFGLYIH), and 518–536 (FLVHHIHAFTIHVTVLILL). Cys-560 and Cys-569 together coordinate [4Fe-4S] cluster. A run of 2 helical transmembrane segments spans residues 576 to 597 (HVFLGLFWMYNAISVVIFHFSW) and 651 to 673 (LSAYGLLFLGAHFVWAFSLMFLF). Residue His-662 participates in chlorophyll a' binding. Residues Met-670 and Tyr-678 each contribute to the chlorophyll a site. Trp-679 contacts phylloquinone. The chain crosses the membrane as a helical span at residues 711–716 (AVGVAH).

This sequence belongs to the PsaA/PsaB family. As to quaternary structure, the PsaA/B heterodimer binds the P700 chlorophyll special pair and subsequent electron acceptors. PSI consists of a core antenna complex that captures photons, and an electron transfer chain that converts photonic excitation into a charge separation. The eukaryotic PSI reaction center is composed of at least 11 subunits. P700 is a chlorophyll a/chlorophyll a' dimer, A0 is one or more chlorophyll a, A1 is one or both phylloquinones and FX is a shared 4Fe-4S iron-sulfur center. is required as a cofactor.

The protein resides in the plastid. The protein localises to the chloroplast thylakoid membrane. The catalysed reaction is reduced [plastocyanin] + hnu + oxidized [2Fe-2S]-[ferredoxin] = oxidized [plastocyanin] + reduced [2Fe-2S]-[ferredoxin]. In terms of biological role, psaA and PsaB bind P700, the primary electron donor of photosystem I (PSI), as well as the electron acceptors A0, A1 and FX. PSI is a plastocyanin-ferredoxin oxidoreductase, converting photonic excitation into a charge separation, which transfers an electron from the donor P700 chlorophyll pair to the spectroscopically characterized acceptors A0, A1, FX, FA and FB in turn. Oxidized P700 is reduced on the lumenal side of the thylakoid membrane by plastocyanin. This is Photosystem I P700 chlorophyll a apoprotein A1 from Araucaria araucana (Monkey-puzzle tree).